The sequence spans 155 residues: Small ribosomal subunit protein uS7c (155 aa).

Belongs to the universal ribosomal protein uS7 family. Part of the 30S ribosomal subunit.

Its subcellular location is the plastid. The protein localises to the chloroplast. Functionally, one of the primary rRNA binding proteins, it binds directly to 16S rRNA where it nucleates assembly of the head domain of the 30S subunit. The chain is Small ribosomal subunit protein uS7c (rps7) from Coelogyne cristata (Orchid).